The primary structure comprises 517 residues: GMP synthase [glutamine-hydrolyzing] (517 aa).

Positions 9–202 (KIIVLDYGSQ…AFNVCKAKGD (194 aa)) constitute a Glutamine amidotransferase type-1 domain. Cys-86 functions as the Nucleophile in the catalytic mechanism. Residues His-176 and Glu-178 contribute to the active site. The GMPS ATP-PPase domain maps to 203–392 (WSMDSFIDME…LGMPDEIVWR (190 aa)). 230–236 (SGGVDSS) provides a ligand contact to ATP.

As to quaternary structure, homodimer.

It carries out the reaction XMP + L-glutamine + ATP + H2O = GMP + L-glutamate + AMP + diphosphate + 2 H(+). The protein operates within purine metabolism; GMP biosynthesis; GMP from XMP (L-Gln route): step 1/1. Its function is as follows. Catalyzes the synthesis of GMP from XMP. The polypeptide is GMP synthase [glutamine-hydrolyzing] (Streptococcus mutans serotype c (strain ATCC 700610 / UA159)).